Reading from the N-terminus, the 210-residue chain is Amelogenin, X isoform (210 aa).

Positions 1-16 (MGTWILFACLLGAAFA) are cleaved as a signal peptide. Phosphoserine is present on Ser-32. Low complexity-rich tracts occupy residues 109-119 (VAPQQPMMPVP) and 136-169 (PSAQQPFQQPFQPQAIPPQSHQPMQPQSPLHPMQ). The interval 109 to 187 (VAPQQPMMPV…PPLFSMQPLS (79 aa)) is disordered. Pro residues predominate over residues 170 to 179 (PLAPQPPLPP).

The protein belongs to the amelogenin family. As to quaternary structure, interacts with KRT5. Several forms are produced by C-terminal processing. Post-translationally, phosphorylated by FAM20C in vitro.

Its subcellular location is the secreted. The protein localises to the extracellular space. It is found in the extracellular matrix. Its function is as follows. Plays a role in the biomineralization of teeth. Seems to regulate the formation of crystallites during the secretory stage of tooth enamel development. Thought to play a major role in the structural organization and mineralization of developing enamel. The sequence is that of Amelogenin, X isoform (Amelx) from Mus musculus (Mouse).